The primary structure comprises 354 residues: Lariat debranching enzyme (354 aa).

A divalent metal cation contacts are provided by Cys14, His16, and Asp45. RNA is bound by residues Lys59, Asn90, His91, Lys134, and His156. An a divalent metal cation-binding site is contributed by Asn90. The interval 130 to 158 (SGIYKSFDEKKPYTYPPSPNDVVSLFHTR) is lariat recognition loop. His180 serves as a coordination point for a divalent metal cation. The RNA site is built by Gly201, Asp205, His230, Met231, and His232. His230 provides a ligand contact to a divalent metal cation. An a divalent metal cation-binding site is contributed by His232.

It belongs to the lariat debranching enzyme family. Requires Fe(2+) as cofactor. The cofactor is Zn(2+). Mn(2+) serves as cofactor.

Its subcellular location is the cytoplasm. The protein localises to the perinuclear region. Active in presence of diverse metals including Fe(2+), Zn(2+) and Mn(2+). Binds two metal cations in two adjacent alpha and beta metal-binding pockets. The activity is the highest with Fe(2+) bound to the 2 metal-binding sites. The activity is slightly lower with Fe(2+) bound to the beta site and Zn(2+) to the alpha site and decreases further when only Zn(2+) is bound. No activity with Mn(2+). However, another study showed activity with Mn(2+) bound to the beta site and Zn(2+) to the alpha site. Mn(2+) appears unable to bind to the alpha site. Functionally, cleaves the 2'-5' phosphodiester linkage at the branch point of excised lariat intron RNA and converts them into linear molecules that can be subsequently degraded, thereby facilitating ribonucleotide turnover. The sequence is that of Lariat debranching enzyme from Entamoeba histolytica (strain ATCC 30459 / HM-1:IMSS / ABRM).